A 1062-amino-acid polypeptide reads, in one-letter code: 3-hydroxy-3-methylglutaryl-coenzyme A reductase 2 (1062 aa).

The Cytoplasmic segment spans residues 1–34 (MAPTNTKDSDTPGWLHRHGTSVLGSVARQACKQP). Residues 35–55 (IYTLVITALLATMTYTSLLEG) form a helical membrane-spanning segment. Topologically, residues 56-230 (SLYNANLTRL…SFVGLIKHAQ (175 aa)) are lumenal. The N-linked (GlcNAc...) asparagine glycan is linked to Asn-61. A helical transmembrane segment spans residues 231 to 251 (IIDIIIMLLAYLAMHLTFLSL). Residues 233–403 (DIIIMLLAYL…FTFYISVLCV (171 aa)) form the SSD domain. At 252–261 (FMSMRQLGSR) the chain is on the cytoplasmic side. The chain crosses the membrane as a helical span at residues 262 to 282 (FWLAYSVLLSGFFSLFFGLKV). Residues 283-287 (TTSSG) are Lumenal-facing. Residues 288–308 (VSTSMITLSECLPILVIIVGF) form a helical membrane-spanning segment. Residues 309–355 (EKPIRLTRAVLRAATESYLPAKPMARRSTPEAIEVAIMREGWRIVRD) are Cytoplasmic-facing. The helical transmembrane segment at 356–375 (YAIEIAILAAGATSRVQGAL) threads the bilayer. The Lumenal segment spans residues 376–377 (PQ). A helical transmembrane segment spans residues 378–398 (FCFLAAWILLFDSLLLFTFYI). At 399-450 (SVLCVKLEITRIRKHVEPRRALEDDDISTGNQDFDSRVFGCKVKAANISRFK) the chain is on the cytoplasmic side. A helical transmembrane segment spans residues 451–471 (FLMVGGFVLFNVLQLSSLTYG). The Lumenal segment spans residues 472 to 564 (NVRVSDWMPY…GCVLAWLEDP (93 aa)). N-linked (GlcNAc...) asparagine glycosylation occurs at Asn-484. The chain crosses the membrane as a helical span at residues 565-585 (VISKWVIAALFLSLVLNSYLM). The Cytoplasmic segment spans residues 586–1062 (KAARWNLRQS…NRSKVAAKTG (477 aa)). Catalysis depends on Glu-744, which acts as the Charge relay system. 750–756 (SASRGCK) provides a ligand contact to CoA. Residues 811–813 (SRF) and 838–846 (DAMGMNMIS) each bind NADP(+). Lys-877 (charge relay system) is an active-site residue. 906–908 (VLK) contributes to the CoA binding site. Catalysis depends on Asp-953, which acts as the Charge relay system. 1048 to 1049 (AH) serves as a coordination point for CoA. The Proton donor role is filled by His-1049. NADP(+) is bound at residue 1053–1054 (NR).

The protein belongs to the HMG-CoA reductase family.

The protein resides in the endoplasmic reticulum membrane. The catalysed reaction is (R)-mevalonate + 2 NADP(+) + CoA = (3S)-3-hydroxy-3-methylglutaryl-CoA + 2 NADPH + 2 H(+). The protein operates within metabolic intermediate biosynthesis; (R)-mevalonate biosynthesis; (R)-mevalonate from acetyl-CoA: step 3/3. Functionally, HMG-CoA reductase; part of the first module of ergosterol biosynthesis pathway that includes the early steps of the pathway, conserved across all eukaryotes, and which results in the formation of mevalonate from acetyl-coenzyme A (acetyl-CoA). Hmg1 and hmg2 catalyze the reduction of hydroxymethylglutaryl-CoA (HMG-CoA) to mevalonate. The first module starts with the action of the cytosolic acetyl-CoA acetyltransferase erg10B that catalyzes the formation of acetoacetyl-CoA. The hydroxymethylglutaryl-CoA synthases erg13A and erg13B then condense acetyl-CoA with acetoacetyl-CoA to form HMG-CoA. The rate-limiting step of the early module is the reduction to mevalonate by the 3-hydroxy-3-methylglutaryl-coenzyme A (HMG-CoA) reductases hmg1 and hmg2. Mevalonate is also a precursor for the extracellular siderophore triacetylfusarinine C (TAFC). In Aspergillus fumigatus (strain ATCC MYA-4609 / CBS 101355 / FGSC A1100 / Af293) (Neosartorya fumigata), this protein is 3-hydroxy-3-methylglutaryl-coenzyme A reductase 2.